The sequence spans 137 residues: MSARTKARKRALDVLYVADIRGESIPATLAVEQQRAAAEPDRQASWAYAREIAEGFVEHQDEIDELIETYSVNWTLARMPAVDRAILRIGIWEILFNADVPDGVAISESVDLASSLSTDESASFVNGMLARIAAAQA.

This sequence belongs to the NusB family.

Involved in transcription antitermination. Required for transcription of ribosomal RNA (rRNA) genes. Binds specifically to the boxA antiterminator sequence of the ribosomal RNA (rrn) operons. The protein is Transcription antitermination protein NusB of Clavibacter sepedonicus (Clavibacter michiganensis subsp. sepedonicus).